Reading from the N-terminus, the 74-residue chain is Mitochondrial import receptor subunit TOM6 homolog (74 aa).

Residues 1 to 16 (MASSTVPVSAAGSANE) are compositionally biased toward polar residues. Residues 1–22 (MASSTVPVSAAGSANETPEIPD) are disordered. Residue Ala-2 is modified to N-acetylalanine.

Belongs to the Tom6 family. As to quaternary structure, forms part of the preprotein translocase complex of the outer mitochondrial membrane (TOM complex) which consists of at least 7 different proteins (TOMM5, TOMM6, TOMM7, TOMM20, TOMM22, TOMM40 and TOMM70).

It is found in the mitochondrion outer membrane. This chain is Mitochondrial import receptor subunit TOM6 homolog (TOMM6), found in Homo sapiens (Human).